Reading from the N-terminus, the 1594-residue chain is RB1-inducible coiled-coil protein 1 (1594 aa).

Residues serine 222, serine 229, and serine 237 each carry the phosphoserine modification. Threonine 238 is modified (phosphothreonine). 5 positions are modified to phosphoserine: serine 243, serine 253, serine 257, serine 261, and serine 266. The short motif at 566–569 (KPRK) is the Nuclear localization signal element. Phosphoserine occurs at positions 624, 647, 650, 652, 653, 734, 1091, 1222, 1370, and 1484. Positions 638–673 (EQKASVSQTSPQSASSPRMESTAGITTTTSPRTPPP) are disordered. Residues 641-654 (ASVSQTSPQSASSP) are compositionally biased toward low complexity. The FFAT signature appears at 731 to 737 (DFMSAVN). Coiled-coil stretches lie at residues 859 to 1397 (LKEK…SSSF) and 1438 to 1485 (METS…SQSM).

The protein belongs to the ATG17 family. Part of a complex consisting of ATG13/KIAA0652, ULK1 and RB1CC1. This complex associates with ATG101. Interacts with PTK2/FAK1 and PTK2B/PYK2. Interacts with GABARAP and GABARAPL1. Interacts with ATG16L1; the interaction is required for ULK1 complex-dependent autophagy. Interacts with RNF111, SKI and SMAD7. Interacts with COP1 in the cytoplasm of proliferating cells in response to UV stimulation. Interacts with TP53. Interacts with C9orf72. Interacts with WDR45B. Interacts with ATG13; this interaction is increased in the absence of TMEM39A. Interacts with WIPI2. Interacts with TAX1BP1. Interacts (via phosphorylated FFAT motif) with MOSPD2, VAPA and VAPB. In terms of processing, phosphorylation at Ser-734 of the FFAT motif activates interaction with MOSPD2, VAPA and VAPB. In terms of tissue distribution, expression levels correlated closely with those of RB1 in cancer cell lines as well as in various normal human tissues. Abundantly expressed in human musculoskeletal and cultured osteosarcoma cells.

The protein resides in the nucleus. The protein localises to the cytoplasm. It localises to the cytosol. It is found in the preautophagosomal structure. Its subcellular location is the lysosome. Functionally, involved in autophagy. Regulates early events but also late events of autophagosome formation through direct interaction with Atg16L1. Required for the formation of the autophagosome-like double-membrane structure that surrounds the Salmonella-containing vacuole (SCV) during S.typhimurium infection and subsequent xenophagy. Involved in repair of DNA damage caused by ionizing radiation, which subsequently improves cell survival by decreasing apoptosis. Inhibits PTK2/FAK1 and PTK2B/PYK2 kinase activity, affecting their downstream signaling pathways. Plays a role as a modulator of TGF-beta-signaling by restricting substrate specificity of RNF111. Functions as a DNA-binding transcription factor. Is a potent regulator of the RB1 pathway through induction of RB1 expression. Plays a crucial role in muscular differentiation. Plays an indispensable role in fetal hematopoiesis and in the regulation of neuronal homeostasis. This chain is RB1-inducible coiled-coil protein 1, found in Homo sapiens (Human).